A 663-amino-acid chain; its full sequence is UvrABC system protein B (663 aa).

Basic and acidic residues predominate over residues 1 to 10 (MIDKRDDKPF). Positions 1-23 (MIDKRDDKPFKLKSKYKPSGDQP) are disordered. In terms of domain architecture, Helicase ATP-binding spans 31-418 (DNIEGGEKAQ…TNTIIEQIIR (388 aa)). Residue 44-51 (GATGTGKT) participates in ATP binding. Positions 97-120 (YYDYYQPEAYVPSSDTYIEKDSSV) match the Beta-hairpin motif. In terms of domain architecture, Helicase C-terminal spans 435-601 (QMDDLLGEIN…TIKKDIRGLI (167 aa)). The region spanning 627–662 (KEAINALQKQMQEAAELLDFELAAQMRDLILELKLM) is the UVR domain.

This sequence belongs to the UvrB family. In terms of assembly, forms a heterotetramer with UvrA during the search for lesions. Interacts with UvrC in an incision complex.

The protein localises to the cytoplasm. The UvrABC repair system catalyzes the recognition and processing of DNA lesions. A damage recognition complex composed of 2 UvrA and 2 UvrB subunits scans DNA for abnormalities. Upon binding of the UvrA(2)B(2) complex to a putative damaged site, the DNA wraps around one UvrB monomer. DNA wrap is dependent on ATP binding by UvrB and probably causes local melting of the DNA helix, facilitating insertion of UvrB beta-hairpin between the DNA strands. Then UvrB probes one DNA strand for the presence of a lesion. If a lesion is found the UvrA subunits dissociate and the UvrB-DNA preincision complex is formed. This complex is subsequently bound by UvrC and the second UvrB is released. If no lesion is found, the DNA wraps around the other UvrB subunit that will check the other stand for damage. The chain is UvrABC system protein B from Streptococcus pyogenes serotype M1.